We begin with the raw amino-acid sequence, 596 residues long: MPVCKNCHGTEFERDLSNANNDLVCKACGVVSEDNPIVSEVTFGETSAGAAVVQGSFIGAGQSHAAFGGSSALESREATLNNARRKLRAVSYALHIPEYITDAAFQWYKLALANNFVQGRRSQNVIASCLYVACRKEKTHHMLIDFSSRLQVSVYSIGATFLKMVKKLHITELPLADPSLFIQHFAEKLDLADKKIKVVKDAVKLAQRMSKDWMFEGRRPAGIAGACILLACRMNNLRRTHTEIVAVSHVAEETLQQRLNEFKNTKAAKLSVQKFRENDVEDGEARPPSFVKNRKKERKIKDSLDKEEMFQTSEEALNKNPILTQVLGEQELSSKEVLFYLKQFSERRARVVERIKATNGIDGENIYHEGSENETRKRKLSEVSIQNEHVEGEDKETEGTEEKVKKVKTKTSEEKKENESGHFQDAIDGYSLETDPYCPRNLHLLPTTDTYLSKVSDDPDNLEDVDDEELNAHLLNEEASKLKERIWIGLNADFLLEQESKRLKQEADIATGNTSVKKKRTRRRNNTRSDEPTKTVDAAAAIGLMSDLQDKSGLHAALKAAEESGDFTTADSVKNMLQKASFSKKINYDAIDGLFR.

The segment at 1-33 (MPVCKNCHGTEFERDLSNANNDLVCKACGVVSE) adopts a TFIIB-type zinc-finger fold. Zn(2+)-binding residues include Cys4, Cys7, Cys25, and Cys28. Tandem repeats lie at residues 90-166 (VSYA…KMVK) and 185-264 (FAEK…EFKN). Disordered stretches follow at residues 363–421 (GENI…NESG) and 509–534 (IATG…EPTK). Over residues 365-375 (NIYHEGSENET) the composition is skewed to basic and acidic residues. Phosphoserine occurs at positions 381 and 384. Residues 388-421 (EHVEGEDKETEGTEEKVKKVKTKTSEEKKENESG) are compositionally biased toward basic and acidic residues. The segment covering 516–526 (VKKKRTRRRNN) has biased composition (basic residues).

Belongs to the TFIIB family. As to quaternary structure, TFIIIB comprises the TATA-binding protein (TBP), the B-related factor (BRF) and the B' component (TFC5).

It localises to the nucleus. Its function is as follows. General activator of RNA polymerase III transcription. Interacts with TBP. Binds to Pol III subunit C34 and to the TAU135 component of TFIIIC. The sequence is that of Transcription factor IIIB 70 kDa subunit (BRF1) from Saccharomyces cerevisiae (strain ATCC 204508 / S288c) (Baker's yeast).